The following is a 381-amino-acid chain: Succinyl-diaminopimelate desuccinylase (381 aa).

His76 contacts Zn(2+). The active site involves Asp78. Asp107 contacts Zn(2+). Glu140 serves as the catalytic Proton acceptor. Zn(2+) contacts are provided by Glu141, Glu169, and His354.

It belongs to the peptidase M20A family. DapE subfamily. As to quaternary structure, homodimer. Zn(2+) is required as a cofactor. The cofactor is Co(2+).

The catalysed reaction is N-succinyl-(2S,6S)-2,6-diaminopimelate + H2O = (2S,6S)-2,6-diaminopimelate + succinate. Its pathway is amino-acid biosynthesis; L-lysine biosynthesis via DAP pathway; LL-2,6-diaminopimelate from (S)-tetrahydrodipicolinate (succinylase route): step 3/3. Catalyzes the hydrolysis of N-succinyl-L,L-diaminopimelic acid (SDAP), forming succinate and LL-2,6-diaminopimelate (DAP), an intermediate involved in the bacterial biosynthesis of lysine and meso-diaminopimelic acid, an essential component of bacterial cell walls. In Gluconobacter oxydans (strain 621H) (Gluconobacter suboxydans), this protein is Succinyl-diaminopimelate desuccinylase.